A 240-amino-acid polypeptide reads, in one-letter code: Sugar fermentation stimulation protein homolog (240 aa).

The protein belongs to the SfsA family.

The chain is Sugar fermentation stimulation protein homolog from Crocosphaera subtropica (strain ATCC 51142 / BH68) (Cyanothece sp. (strain ATCC 51142)).